Consider the following 263-residue polypeptide: Post-GPI attachment to proteins factor 2 (263 aa).

The next 6 helical transmembrane spans lie at 16-36, 69-89, 109-129, 143-163, 180-200, and 208-228; these read FVFCIGGLPSSALLICVLLSL, YIWRILIGLHIGPRLVVAVAF, FLCNIACGLNLLENFFLLALT, CFGGFAISSIIYMILSTWLFS, YKILGASIFVVCFFLGGYLYW, and PGIYTLFALVEYSAVLSNIFF.

The protein belongs to the PGAP2 family.

Its subcellular location is the golgi apparatus membrane. The protein localises to the endoplasmic reticulum membrane. Functionally, involved in the lipid remodeling steps of GPI-anchor maturation. Required for stable expression of GPI-anchored proteins at the cell surface. This is Post-GPI attachment to proteins factor 2 from Caenorhabditis briggsae.